Consider the following 167-residue polypeptide: Zymogen granule membrane protein 16 (167 aa).

Residues 1–16 (MLTVALLALLCASASG) form the signal peptide. The 136-residue stretch at 24 to 159 (SSYSGEYGGG…IDAIGLHWDV (136 aa)) folds into the Jacalin-type lectin domain.

The protein belongs to the jacalin lectin family. Highly expressed in liver. Detected at lower levels in colon, ileum and jejunum.

It localises to the secreted. The protein localises to the extracellular space. Its subcellular location is the extracellular matrix. It is found in the zymogen granule lumen. The protein resides in the golgi apparatus lumen. Its function is as follows. May play a role in protein trafficking. May act as a linker molecule between the submembranous matrix on the luminal side of zymogen granule membrane (ZGM) and aggregated secretory proteins during granule formation in the TGN. The sequence is that of Zymogen granule membrane protein 16 (ZG16) from Homo sapiens (Human).